The chain runs to 75 residues: Peptide Ctri10033 (75 aa).

The first 22 residues, 1–22, serve as a signal peptide directing secretion; it reads MNSKYLFVFLILIVTFTDLCQG. An Arginine amide modification is found at arginine 43. The propeptide occupies 47 to 75; sequence ELGSQYDYLQDFRKRELDLDDLLSKFPDY.

It belongs to the non-disulfide-bridged peptide (NDBP) superfamily. Short antimicrobial peptide (group 4) family. As to expression, expressed by the venom gland.

Its subcellular location is the secreted. This chain is Peptide Ctri10033, found in Chaerilus tricostatus (Scorpion).